Consider the following 379-residue polypeptide: Protein OSCP1 (379 aa).

Predominantly expressed in testis.

The protein resides in the basal cell membrane. In terms of biological role, may be involved in drug clearance in the placenta. The sequence is that of Protein OSCP1 (Oscp1) from Rattus norvegicus (Rat).